A 633-amino-acid polypeptide reads, in one-letter code: Putative oligopeptide transporter HI_0561 (633 aa).

The next 15 membrane-spanning stretches (helical) occupy residues 8–28, 45–65, 70–90, 128–148, 180–200, 230–250, 281–301, 311–331, 345–365, 379–399, 420–440, 483–503, 515–535, 564–584, and 604–624; these read GVTF…LKFF, SAGT…MGYW, FWQT…FTIP, IAYG…LRVM, IGIV…GVAV, IGVG…MKPM, MIYI…HFIA, ILLV…VAAA, PISG…VSIG, FLTA…CISN, VALI…LEIL, WTYI…DAFL, VIAV…VIVG, LFSA…AFII, and WDTI…VIFA.

It belongs to the oligopeptide OPT transporter family.

It is found in the cell membrane. The chain is Putative oligopeptide transporter HI_0561 from Haemophilus influenzae (strain ATCC 51907 / DSM 11121 / KW20 / Rd).